We begin with the raw amino-acid sequence, 334 residues long: Glycerol-3-phosphate dehydrogenase [NAD(P)+] (334 aa).

Positions 14, 15, 35, and 109 each coordinate NADPH. Residues lysine 109, glycine 138, and threonine 140 each coordinate sn-glycerol 3-phosphate. Alanine 142 lines the NADPH pocket. Sn-glycerol 3-phosphate contacts are provided by lysine 194, aspartate 247, serine 257, arginine 258, and asparagine 259. The active-site Proton acceptor is lysine 194. Arginine 258 contacts NADPH. Valine 282 and glutamate 284 together coordinate NADPH.

It belongs to the NAD-dependent glycerol-3-phosphate dehydrogenase family.

It localises to the cytoplasm. The enzyme catalyses sn-glycerol 3-phosphate + NAD(+) = dihydroxyacetone phosphate + NADH + H(+). The catalysed reaction is sn-glycerol 3-phosphate + NADP(+) = dihydroxyacetone phosphate + NADPH + H(+). The protein operates within membrane lipid metabolism; glycerophospholipid metabolism. Catalyzes the reduction of the glycolytic intermediate dihydroxyacetone phosphate (DHAP) to sn-glycerol 3-phosphate (G3P), the key precursor for phospholipid synthesis. The protein is Glycerol-3-phosphate dehydrogenase [NAD(P)+] of Aeromonas hydrophila subsp. hydrophila (strain ATCC 7966 / DSM 30187 / BCRC 13018 / CCUG 14551 / JCM 1027 / KCTC 2358 / NCIMB 9240 / NCTC 8049).